Reading from the N-terminus, the 486-residue chain is PTS system N-acetylmuramic acid-specific EIIBC component (486 aa).

A PTS EIIB type-1 domain is found at 1–89; it reads MAKITQTMIS…NKLIESVING (89 aa). The active-site Phosphocysteine intermediate; for EIIB activity is cysteine 28. The 360-residue stretch at 127-486 folds into the PTS EIIC type-1 domain; that stretch reads SKFATIFTPL…FFGSKDVDLS (360 aa). 10 consecutive transmembrane segments (helical) span residues 129–149, 170–190, 196–216, 230–250, 268–288, 312–332, 347–367, 381–401, 411–431, and 453–473; these read FATI…LLGF, LIAY…ILIG, AFGG…LGYN, FFGY…AAII, MILT…VVIM, AAIL…QGFV, LFPI…ALYF, GAII…VTLP, IGGA…LPVG, and IFAG…VGFL.

It localises to the cell inner membrane. The enzyme catalyses N-acetyl-beta-D-muramate(out) + N(pros)-phospho-L-histidyl-[protein] = N-acetyl-beta-D-muramate 6-phosphate(in) + L-histidyl-[protein]. Functionally, the phosphoenolpyruvate-dependent sugar phosphotransferase system (sugar PTS), a major carbohydrate active transport system, catalyzes the phosphorylation of incoming sugar substrates concomitantly with their translocation across the cell membrane. This system is involved in N-acetylmuramic acid (MurNAc) transport, yielding cytoplasmic MurNAc-6-P. Is also able to take up anhydro-N-acetylmuramic acid (anhMurNAc), but cannot phosphorylate the carbon 6, probably because of the 1,6-anhydro ring. The sequence is that of PTS system N-acetylmuramic acid-specific EIIBC component (murP) from Vibrio vulnificus (strain CMCP6).